An 82-amino-acid polypeptide reads, in one-letter code: Phosphoribosylformylglycinamidine synthase subunit PurS (82 aa).

The protein belongs to the PurS family. As to quaternary structure, homodimer. Part of the FGAM synthase complex composed of 1 PurL, 1 PurQ and 2 PurS subunits.

The protein resides in the cytoplasm. It carries out the reaction N(2)-formyl-N(1)-(5-phospho-beta-D-ribosyl)glycinamide + L-glutamine + ATP + H2O = 2-formamido-N(1)-(5-O-phospho-beta-D-ribosyl)acetamidine + L-glutamate + ADP + phosphate + H(+). It participates in purine metabolism; IMP biosynthesis via de novo pathway; 5-amino-1-(5-phospho-D-ribosyl)imidazole from N(2)-formyl-N(1)-(5-phospho-D-ribosyl)glycinamide: step 1/2. Part of the phosphoribosylformylglycinamidine synthase complex involved in the purines biosynthetic pathway. Catalyzes the ATP-dependent conversion of formylglycinamide ribonucleotide (FGAR) and glutamine to yield formylglycinamidine ribonucleotide (FGAM) and glutamate. The FGAM synthase complex is composed of three subunits. PurQ produces an ammonia molecule by converting glutamine to glutamate. PurL transfers the ammonia molecule to FGAR to form FGAM in an ATP-dependent manner. PurS interacts with PurQ and PurL and is thought to assist in the transfer of the ammonia molecule from PurQ to PurL. In Thermotoga maritima (strain ATCC 43589 / DSM 3109 / JCM 10099 / NBRC 100826 / MSB8), this protein is Phosphoribosylformylglycinamidine synthase subunit PurS.